We begin with the raw amino-acid sequence, 624 residues long: Alpha-amylase 1 (624 aa).

The N-terminal stretch at Met1–Arg28 is a signal peptide. One can recognise a CBM21 domain in the interval Glu40–Ser133. An intrachain disulfide couples Cys177 to Cys185. Trp230 lines the substrate pocket. Asn268 provides a ligand contact to Ca(2+). Residue His269 coordinates substrate. Cys297 and Cys311 are oxidised to a cystine. Residue Asn304 is glycosylated (N-linked (GlcNAc...) asparagine). The Ca(2+) site is built by Glu309 and Asp322. Asn344 carries an N-linked (GlcNAc...) asparagine glycan. A substrate-binding site is contributed by Arg351. 3 residues coordinate Ca(2+): Asp353, His357, and Glu377. The Nucleophile role is filled by Asp353. Lys356 to His357 provides a ligand contact to substrate. Residue Glu377 is the Proton donor of the active site. Residue Gly381 participates in substrate binding. An intrachain disulfide couples Cys387 to Cys430. Substrate-binding residues include Asp444 and Arg491. Cys587 and Cys622 form a disulfide bridge.

This sequence belongs to the glycosyl hydrolase 13 family. Ca(2+) is required as a cofactor.

It localises to the secreted. It carries out the reaction Endohydrolysis of (1-&gt;4)-alpha-D-glucosidic linkages in polysaccharides containing three or more (1-&gt;4)-alpha-linked D-glucose units.. This is Alpha-amylase 1 (LKA1) from Lipomyces kononenkoae (Yeast).